The following is a 106-amino-acid chain: Iron-sulfur cluster assembly protein CyaY (106 aa).

Belongs to the frataxin family.

Functionally, involved in iron-sulfur (Fe-S) cluster assembly. May act as a regulator of Fe-S biogenesis. In Colwellia psychrerythraea (strain 34H / ATCC BAA-681) (Vibrio psychroerythus), this protein is Iron-sulfur cluster assembly protein CyaY.